A 231-amino-acid polypeptide reads, in one-letter code: U1 small nuclear ribonucleoprotein C-1 (231 aa).

The Matrin-type zinc-finger motif lies at 4-36; it reads YYCDYCDTYLTHDSPSVRKQHNAGYKHKANVRT. Composition is skewed to pro residues over residues 117–127, 134–159, and 167–178; these read APGIPGYPGGP, GAPPGSMPQPGAPPGSMPQPGAPPGS, and LPRPPTLPPPTS. Residues 117-231 form a disordered region; the sequence is APGIPGYPGG…SYAQPSEGNH (115 aa). Positions 181–193 are enriched in low complexity; that stretch reads PGAPIPNSAAPPA. Positions 199 to 217 are enriched in pro residues; it reads PPAPAGPTSGAPPAPPTAP.

The protein belongs to the U1 small nuclear ribonucleoprotein C family. In terms of assembly, U1 snRNP is composed of the 7 core Sm proteins B/B', D1, D2, D3, E, F and G that assemble in a heptameric protein ring on the Sm site of the small nuclear RNA to form the core snRNP, and at least 3 U1 snRNP-specific proteins U1-70K, U1-A and U1-C. U1-C interacts with U1 snRNA and the 5' splice-site region of the pre-mRNA.

Its subcellular location is the nucleus. Its function is as follows. Component of the spliceosomal U1 snRNP, which is essential for recognition of the pre-mRNA 5' splice-site and the subsequent assembly of the spliceosome. U1-C is directly involved in initial 5' splice-site recognition for both constitutive and regulated alternative splicing. The interaction with the 5' splice-site seems to precede base-pairing between the pre-mRNA and the U1 snRNA. Stimulates commitment or early (E) complex formation by stabilizing the base pairing of the 5' end of the U1 snRNA and the 5' splice-site region. This chain is U1 small nuclear ribonucleoprotein C-1, found in Sorghum bicolor (Sorghum).